The sequence spans 360 residues: Chorismate synthase (360 aa).

Residue R47 coordinates NADP(+). FMN is bound by residues R124 to S126, G286, K301 to T305, and R327.

The protein belongs to the chorismate synthase family. In terms of assembly, homotetramer. FMNH2 is required as a cofactor.

The catalysed reaction is 5-O-(1-carboxyvinyl)-3-phosphoshikimate = chorismate + phosphate. Its pathway is metabolic intermediate biosynthesis; chorismate biosynthesis; chorismate from D-erythrose 4-phosphate and phosphoenolpyruvate: step 7/7. Catalyzes the anti-1,4-elimination of the C-3 phosphate and the C-6 proR hydrogen from 5-enolpyruvylshikimate-3-phosphate (EPSP) to yield chorismate, which is the branch point compound that serves as the starting substrate for the three terminal pathways of aromatic amino acid biosynthesis. This reaction introduces a second double bond into the aromatic ring system. This chain is Chorismate synthase, found in Synechococcus sp. (strain RCC307).